The chain runs to 341 residues: HTH-type transcriptional repressor PurR (341 aa).

The HTH lacI-type domain occupies 2–56; the sequence is ATIKDVAKRAGVSTTTVSHVINKTRFVAEETKAAVRAAIKELHYSPSAVARSLKV. Residues 4–23 constitute a DNA-binding region (H-T-H motif); the sequence is IKDVAKRAGVSTTTVSHVIN. Residues 48-56 mediate DNA binding; that stretch reads SAVARSLKV. Positions 73, 190, 192, 221, and 275 each coordinate hypoxanthine.

In terms of assembly, homodimer.

Its pathway is purine metabolism; purine nucleotide biosynthesis [regulation]. Its function is as follows. Is the main repressor of the genes involved in the de novo synthesis of purine nucleotides, regulating purB, purC, purEK, purF, purHD, purL, purMN and guaBA expression. PurR is allosterically activated to bind its cognate DNA by binding the purine corepressors, hypoxanthine or guanine, thereby effecting transcription repression. The polypeptide is HTH-type transcriptional repressor PurR (Pectobacterium carotovorum subsp. carotovorum (strain PC1)).